The following is a 317-amino-acid chain: MKVLWAALLVTFLAGCQAKVEQPVESEPEPELRQQTEWQSGQPWELALGRFWDYLRWVQTLSEQVQEELLSSQVTQELTTLMDETMKELKAYKSELEEQLSPVAEETRARLSKELQAAQARLGADMEDVRSRLVQYRGEVQAMLGQSTEELRARLASHLRKLRKRLLRDADDLQKRLAVYQAGAREGAERGVSAIRERLGPLVEQGRVRAATVGSLAGQPLQERAQAWGERLRARMEEVGSRTRDRLDEVKEQVAEVRAKLEEQAQQISLQAEAFQARLKSWFEPLVEDMQRQWAGLVEKVQAAVGASTAPVPSDNH.

A signal peptide spans 1-18; the sequence is MKVLWAALLVTFLAGCQA. A run of 8 repeats spans residues 80 to 101, 102 to 123, 124 to 145, 146 to 167, 168 to 189, 190 to 211, 212 to 233, and 234 to 255. Residues 80-255 are 8 X 22 AA approximate tandem repeats; that stretch reads TLMDETMKEL…RLDEVKEQVA (176 aa). Met143 bears the Methionine sulfoxide mark. Ser147 carries the phosphoserine modification. An LDL and other lipoprotein receptors binding region spans residues 158 to 168; sequence HLRKLRKRLLR. Residue 162–165 coordinates heparin; that stretch reads LRKR. The lipid-binding and lipoprotein association stretch occupies residues 210 to 290; that stretch reads AATVGSLAGQ…SWFEPLVEDM (81 aa). Thr212 carries an O-linked (GalNAc...) threonine glycan. 229 to 236 contributes to the heparin binding site; the sequence is GERLRARM. A homooligomerization region spans residues 266-317; sequence QQISLQAEAFQARLKSWFEPLVEDMQRQWAGLVEKVQAAVGASTAPVPSDNH. The tract at residues 278 to 290 is specificity for association with VLDL; it reads RLKSWFEPLVEDM.

This sequence belongs to the apolipoprotein A1/A4/E family. As to quaternary structure, homotetramer. May interact with ABCA1; functionally associated with ABCA1 in the biogenesis of HDLs. May interact with APP/A4 amyloid-beta peptide; the interaction is extremely stable in vitro but its physiological significance is unclear. May interact with MAPT. May interact with MAP2. In the cerebrospinal fluid, interacts with secreted SORL1. Interacts with PMEL; this allows the loading of PMEL luminal fragment on ILVs to induce fibril nucleation. APOE exists as multiple glycosylated and sialylated glycoforms within cells and in plasma. The extent of glycosylation and sialylation are tissue and context specific. Post-translationally, glycated in plasma VLDL. In terms of processing, phosphorylated by FAM20C in the extracellular medium.

It localises to the secreted. It is found in the extracellular space. Its subcellular location is the extracellular matrix. The protein resides in the extracellular vesicle. The protein localises to the endosome. It localises to the multivesicular body. APOE is an apolipoprotein, a protein associating with lipid particles, that mainly functions in lipoprotein-mediated lipid transport between organs via the plasma and interstitial fluids. APOE is a core component of plasma lipoproteins and is involved in their production, conversion and clearance. Apolipoproteins are amphipathic molecules that interact both with lipids of the lipoprotein particle core and the aqueous environment of the plasma. As such, APOE associates with chylomicrons, chylomicron remnants, very low density lipoproteins (VLDL) and intermediate density lipoproteins (IDL) but shows a preferential binding to high-density lipoproteins (HDL). It also binds a wide range of cellular receptors including the LDL receptor/LDLR, the LDL receptor-related proteins LRP1, LRP2 and LRP8 and the very low-density lipoprotein receptor/VLDLR that mediate the cellular uptake of the APOE-containing lipoprotein particles. Finally, APOE also has a heparin-binding activity and binds heparan-sulfate proteoglycans on the surface of cells, a property that supports the capture and the receptor-mediated uptake of APOE-containing lipoproteins by cells. A main function of APOE is to mediate lipoprotein clearance through the uptake of chylomicrons, VLDLs, and HDLs by hepatocytes. APOE is also involved in the biosynthesis by the liver of VLDLs as well as their uptake by peripheral tissues ensuring the delivery of triglycerides and energy storage in muscle, heart and adipose tissues. By participating in the lipoprotein-mediated distribution of lipids among tissues, APOE plays a critical role in plasma and tissues lipid homeostasis. APOE is also involved in two steps of reverse cholesterol transport, the HDLs-mediated transport of cholesterol from peripheral tissues to the liver, and thereby plays an important role in cholesterol homeostasis. First, it is functionally associated with ABCA1 in the biogenesis of HDLs in tissues. Second, it is enriched in circulating HDLs and mediates their uptake by hepatocytes. APOE also plays an important role in lipid transport in the central nervous system, regulating neuron survival and sprouting. The protein is Apolipoprotein E (APOE) of Rhinopithecus roxellana (Golden snub-nosed monkey).